Here is a 148-residue protein sequence, read N- to C-terminus: 3-dehydroquinate dehydratase (148 aa).

Tyr-22 serves as the catalytic Proton acceptor. The substrate site is built by Asn-73, His-79, and Asp-86. His-99 (proton donor) is an active-site residue. Substrate contacts are provided by residues Leu-100–Ser-101 and Arg-110.

It belongs to the type-II 3-dehydroquinase family. As to quaternary structure, homododecamer.

The enzyme catalyses 3-dehydroquinate = 3-dehydroshikimate + H2O. Its pathway is metabolic intermediate biosynthesis; chorismate biosynthesis; chorismate from D-erythrose 4-phosphate and phosphoenolpyruvate: step 3/7. Its function is as follows. Catalyzes a trans-dehydration via an enolate intermediate. This chain is 3-dehydroquinate dehydratase, found in Prochlorococcus marinus (strain MIT 9211).